A 134-amino-acid chain; its full sequence is ATP synthase epsilon chain (134 aa).

This sequence belongs to the ATPase epsilon chain family. F-type ATPases have 2 components, CF(1) - the catalytic core - and CF(0) - the membrane proton channel. CF(1) has five subunits: alpha(3), beta(3), gamma(1), delta(1), epsilon(1). CF(0) has three main subunits: a, b and c.

The protein localises to the cellular thylakoid membrane. Produces ATP from ADP in the presence of a proton gradient across the membrane. In Prochlorococcus marinus (strain MIT 9301), this protein is ATP synthase epsilon chain.